The following is a 362-amino-acid chain: Phosphoserine aminotransferase (362 aa).

Ser-9 and Arg-42 together coordinate L-glutamate. Pyridoxal 5'-phosphate-binding positions include 76–77 (GR), Trp-102, Thr-153, Asp-174, and Gln-197. N6-(pyridoxal phosphate)lysine is present on Lys-198. A pyridoxal 5'-phosphate-binding site is contributed by 239 to 240 (NT).

This sequence belongs to the class-V pyridoxal-phosphate-dependent aminotransferase family. SerC subfamily. In terms of assembly, homodimer. Pyridoxal 5'-phosphate is required as a cofactor.

The protein resides in the cytoplasm. It carries out the reaction O-phospho-L-serine + 2-oxoglutarate = 3-phosphooxypyruvate + L-glutamate. The enzyme catalyses 4-(phosphooxy)-L-threonine + 2-oxoglutarate = (R)-3-hydroxy-2-oxo-4-phosphooxybutanoate + L-glutamate. The protein operates within amino-acid biosynthesis; L-serine biosynthesis; L-serine from 3-phospho-D-glycerate: step 2/3. It functions in the pathway cofactor biosynthesis; pyridoxine 5'-phosphate biosynthesis; pyridoxine 5'-phosphate from D-erythrose 4-phosphate: step 3/5. Functionally, catalyzes the reversible conversion of 3-phosphohydroxypyruvate to phosphoserine and of 3-hydroxy-2-oxo-4-phosphonooxybutanoate to phosphohydroxythreonine. This chain is Phosphoserine aminotransferase, found in Escherichia coli O1:K1 / APEC.